A 1117-amino-acid polypeptide reads, in one-letter code: Lid2 complex component snt2 (1117 aa).

The 120-residue stretch at 89–208 (ELIQPNDFVL…QNINKVFDVV (120 aa)) folds into the BAH domain. Residues 227-282 (NYDFIVTEYGKGRALLNEPSNCKVCKKWCAFDFSVQCADCKKYYHMDCVVPPLLKK) form a Phorbol-ester/DAG-type zinc finger. Residues 245 to 297 (PSNCKVCKKWCAFDFSVQCADCKKYYHMDCVVPPLLKKPPHGFGWTCATCSFA) form a PHD-type 1 zinc finger. Residues 361-380 (SSRNLHQQSRKSLDENKPNS) are disordered. The PHD-type 2 zinc finger occupies 798-882 (KKCCALCGIV…SWACLSCRSN (85 aa)). The segment at 890 to 925 (DNHCVLCLQSASHSLMKKTVEGNWVHLICASWTPDV) adopts a C2HC pre-PHD-type zinc-finger fold. A PHD-type 3; degenerate zinc finger spans residues 948–1002 (KKCEVCGNSFGVCVSSPNSGLTSHVTCAEKANWYLGFEFVKQDQSPFSMLSNLKS).

As to quaternary structure, component of the Lid2 complex composed of ash2, jmj3, lid2, sdc1 and snt2.

It is found in the nucleus. This chain is Lid2 complex component snt2 (snt2), found in Schizosaccharomyces pombe (strain 972 / ATCC 24843) (Fission yeast).